A 616-amino-acid polypeptide reads, in one-letter code: MAEDEPDAKSPKTGGRAPPGGAEAGEPTTLLQRLRGTISKAVQNKVEGILQDVQKFSDNDKLYLYLQLPSGPTTGDKSSEPSTLSNEEYMYAYRWIRNHLEEHTDTCLPKQSVYDAYRKYCESLACCRPLSTANFGKIIREIFPDIKARRLGGRGQSKYCYSGIRRKTLVSMPPLPGLDLKGSESPEMGPEVTPAPRDELVEAACALTCDWAERILKRSFSSIVEVARFLLQQHLISARSAHAHVLKAMGLAEEDEHAPRERSSKPKNGLENPEGGAHKKPERLAQPPKDLEARTGAGPLARGERKKSVVESSAPGANNLQVNALVARLPLLLPRAPRSLIPPIPVSPPILAPRLSSGALKVATLPLSSRAGAPPAAVPIINMILPTVPALPGPGPGPGRAPPGGLTQPRGTENREVGIGGDQGPHDKGVKRTAEVPVSEASGQAPPAKAAKQDIEDTASDAKRKRGRPRKKSGGSGERNSTPLKSAAAMESAQSSRLPWETWGSGGEGNSAGGAERPGPMGEAEKGAVLAQGQGDGTVSKGGRGPGSQHTKEAEDKIPLVPSKVSVIKGSRSQKEAFPLAKGEVDTAPQGNKDLKEHVLQSSLSQEHKDPKATPP.

Residues 1–29 form a disordered region; that stretch reads MAEDEPDAKSPKTGGRAPPGGAEAGEPTT. Ala-2 bears the N-acetylalanine mark. Position 10 is a phosphoserine (Ser-10). Positions 13–29 are enriched in low complexity; the sequence is TGGRAPPGGAEAGEPTT. An N-terminal domain region spans residues 25-90; that stretch reads GEPTTLLQRL…PSTLSNEEYM (66 aa). The segment at 62 to 66 is leucine-rich region; critical for dimer formation and for interaction with RFXAP; it reads LYLYL. The RFX-type winged-helix DNA-binding region spans 92-168; it reads AYRWIRNHLE…YCYSGIRRKT (77 aa). The PxLPxI/L motif; mediates interaction with RFXANK signature appears at 173–178; that stretch reads PPLPGL. Ser-185 carries the post-translational modification Phosphoserine. Disordered regions lie at residues 252–314 and 391–616; these read AEED…ESSA and LPGP…ATPP. Over residues 276–293 the composition is skewed to basic and acidic residues; it reads GAHKKPERLAQPPKDLEA. A compositionally biased stretch (pro residues) spans 391 to 401; it reads LPGPGPGPGRA. Basic and acidic residues predominate over residues 424–434; the sequence is GPHDKGVKRTA. The segment covering 463 to 473 has biased composition (basic residues); it reads KRKRGRPRKKS. Residues 534–546 show a composition bias toward gly residues; the sequence is QGDGTVSKGGRGP. The span at 606–616 shows a compositional bias: basic and acidic residues; the sequence is QEHKDPKATPP.

It belongs to the RFX family. As to quaternary structure, homodimer. The RFX heterotetrameric complex consists of 2 molecules of RFX5 and one each of RFXAP and RFX-B/RFXANK; with each subunit representing a separate complementation group. Interacts (via PxLPxI/L motif) with RFXANK (via ankyrin repeats); the interaction is direct. RFX forms cooperative DNA binding complexes with X2BP and CBF/NF-Y. RFX associates with CIITA to form an active transcriptional complex. Phosphorylated. Ubiquitous.

It is found in the nucleus. Its function is as follows. Activates transcription from class II MHC promoters. Recognizes X-boxes. Mediates cooperative binding between RFX and NF-Y. RFX binds the X1 box of MHC-II promoters. The sequence is that of DNA-binding protein RFX5 (RFX5) from Homo sapiens (Human).